Here is a 204-residue protein sequence, read N- to C-terminus: Large ribosomal subunit protein eL15 (204 aa).

It belongs to the eukaryotic ribosomal protein eL15 family.

The sequence is that of Large ribosomal subunit protein eL15 (RpL15) from Chironomus tentans (Midge).